The following is a 275-amino-acid chain: Large ribosomal subunit protein uL2 (275 aa).

Residues 221–275 (RGTAMNPIDHPHGGGEGKNFGKHPVSPWGVQSKGKKTRKNKRTEKYILYNRKYKK) form a disordered region. A compositionally biased stretch (basic residues) spans 253-262 (KGKKTRKNKR).

This sequence belongs to the universal ribosomal protein uL2 family. As to quaternary structure, part of the 50S ribosomal subunit. Forms a bridge to the 30S subunit in the 70S ribosome.

In terms of biological role, one of the primary rRNA binding proteins. Required for association of the 30S and 50S subunits to form the 70S ribosome, for tRNA binding and peptide bond formation. It has been suggested to have peptidyltransferase activity; this is somewhat controversial. Makes several contacts with the 16S rRNA in the 70S ribosome. This Wigglesworthia glossinidia brevipalpis protein is Large ribosomal subunit protein uL2.